The primary structure comprises 183 residues: V-type ATP synthase subunit E (183 aa).

The protein belongs to the V-ATPase E subunit family.

In terms of biological role, produces ATP from ADP in the presence of a proton gradient across the membrane. This chain is V-type ATP synthase subunit E, found in Fusobacterium nucleatum subsp. nucleatum (strain ATCC 25586 / DSM 15643 / BCRC 10681 / CIP 101130 / JCM 8532 / KCTC 2640 / LMG 13131 / VPI 4355).